The sequence spans 310 residues: p-hydroxybenzoic acid efflux pump subunit AaeA (310 aa).

The helical transmembrane segment at alanine 12–tyrosine 32 threads the bilayer.

This sequence belongs to the membrane fusion protein (MFP) (TC 8.A.1) family.

It localises to the cell inner membrane. Functionally, forms an efflux pump with AaeB. The polypeptide is p-hydroxybenzoic acid efflux pump subunit AaeA (Escherichia coli O139:H28 (strain E24377A / ETEC)).